A 383-amino-acid polypeptide reads, in one-letter code: Lipid-A-disaccharide synthase (383 aa).

Belongs to the LpxB family.

It catalyses the reaction a lipid X + a UDP-2-N,3-O-bis[(3R)-3-hydroxyacyl]-alpha-D-glucosamine = a lipid A disaccharide + UDP + H(+). It participates in bacterial outer membrane biogenesis; LPS lipid A biosynthesis. Functionally, condensation of UDP-2,3-diacylglucosamine and 2,3-diacylglucosamine-1-phosphate to form lipid A disaccharide, a precursor of lipid A, a phosphorylated glycolipid that anchors the lipopolysaccharide to the outer membrane of the cell. This Syntrophus aciditrophicus (strain SB) protein is Lipid-A-disaccharide synthase.